The chain runs to 301 residues: Thyroxine 5-deiodinase (301 aa).

At 1–41 (MSRQAAPRWVVGEGRGTLGGAATMLRSLLLHSLRLCSQTAS) the chain is on the cytoplasmic side. Residues 42 to 64 (CLVLFPRFLGTAFMLWLLDFLCI) traverse the membrane as a helical; Signal-anchor for type II membrane protein segment. Residues 65–301 (RKHLLGRRRR…QLHGPQPRRV (237 aa)) are Extracellular-facing. Residue Sec-167 is part of the active site. Position 167 (Sec-167) is a non-standard amino acid, selenocysteine.

It belongs to the iodothyronine deiodinase family. In terms of assembly, monomer. Homodimer. May undergo minor heretodimerization with DIO1 and DIO2. In terms of tissue distribution, highly expressed in mammary gland. Detected at lower levels in kidney, and at very low levels in the other tissues.

It localises to the cell membrane. The protein localises to the endosome membrane. The catalysed reaction is 3,3',5'-triiodo-L-thyronine + iodide + A + H(+) = L-thyroxine + AH2. It carries out the reaction 3,3'-diiodo-L-thyronine + iodide + A + H(+) = 3,3',5-triiodo-L-thyronine + AH2. The enzyme catalyses 3-iodo-L-thyronine + iodide + A + H(+) = 3,5-diiodo-L-thyronine + AH2. It catalyses the reaction L-thyronine + iodide + A + H(+) = 3-iodo-L-thyronine + AH2. The catalysed reaction is 3',5'-diiodo-L-thyronine + iodide + A + H(+) = 3,3',5'-triiodo-L-thyronine + AH2. It carries out the reaction 3'-iodo-L-thyronine + iodide + A + H(+) = 3,3'-diiodo-L-thyronine + AH2. The enzyme catalyses 3,3',5'-triiodothyronamine + iodide + A + H(+) = 3,3',5,5'-tetraiodothyronamine + AH2. It catalyses the reaction 3',5'-diiodothyronamine + iodide + A + H(+) = 3,3',5'-triiodothyronamine + AH2. The catalysed reaction is 3,3'-diiodothyronamine + iodide + A + H(+) = 3,3',5-triiodothyronamine + AH2. It carries out the reaction 3-iodothyronamine + iodide + A + H(+) = 3,5-diiodothyronamine + AH2. The enzyme catalyses 3'-iodothyronamine + iodide + A + H(+) = 3,3'-diiodothyronamine + AH2. It catalyses the reaction thyronamine + iodide + A + H(+) = 3-iodothyronamine + AH2. Functionally, plays a crucial role in the metabolism of thyroid hormones (TH) and has specific roles in TH activation and inactivation by deiodination. Catalyzes the deiodination of L-thyroxine (T4) to 3,3',5'-triiodothyronine (rT3), 3,5,3'-triiodothyronine (T3) to 3,3'-diiodothyronine (3,3'-T2), 3,5-diiodothyronine (3,5-T2) to 3-monoiodothyronine (3-T1), rT3 to 3',5'-diiodothyronine (3',5'-T2) and 3,3'-T2 to 3'-monoiodothyronine (3'-T1) via inner-ring deiodination (IRD). Catalyzes the deiodination of 3-T1 to L-thyronine (T0) via outer-ring deiodination (ORD). Catalyzes the tyrosyl ring deiodinations of 3,3',5,5'-tetraiodothyronamine, 3,3',5'-triiodothyronamine, 3,5,3'-triiodothyronamine, 3,5-diiodothyronamine, 3,3'-diiodothyronamine and 3-iodothyronamine. This chain is Thyroxine 5-deiodinase (DIO3), found in Bos taurus (Bovine).